Here is a 401-residue protein sequence, read N- to C-terminus: MDRRVVITGMGGLCGLGTDTTSIWKWSARRRSAIGPVLNTELHGLKGIVGAEIKALPDHNIDRKQLVSMDRISVLAVIAAHEAMRQAGLSCNEGNALRFGATVGVGLGGWDATEKAYRPSLSTGGRTEIFTGVKAMPSAAACQVSMSLGLRGPVFGVTSACSSANHAIASAVDQIKCGRADVMLAGGSDAPLVWIVLKAWEAMRALAPDTCRPFSAGRKGVVLGEGAGMAVLESYEHATARGATILAEVAGVGLSADAFHITAPAVHGPESAMRACLADAGLNAEDVDYLNAHGTGTKANDQNETTAIKRVFGDHAYSMSISSTKSTHAHCIGAASALEMIACVMAIQEGVVPPTANYREPDPDCDLDVTPNVPRERKVRVAMSNAFAMGGTNAVLAFKQV.

The Ketosynthase family 3 (KS3) domain maps to Asp-2–Gln-400. Residues Cys-161, His-293, and His-330 each act as for beta-ketoacyl synthase activity in the active site. The chain crosses the membrane as a helical span at residues His-328–Ile-347.

Belongs to the thiolase-like superfamily. Beta-ketoacyl-ACP synthases family.

The protein resides in the cell inner membrane. Proposed to synthesize NOD factor fatty acyl chain. Involved in the synthesis of a highly unsaturated fatty acid moiety, which forms part of a lipo-oligosaccharide that is responsible for host specificity. This chain is Nodulation protein E (nodE), found in Rhizobium meliloti (Ensifer meliloti).